Here is a 240-residue protein sequence, read N- to C-terminus: Coatomer subunit delta (240 aa).

The span at 215 to 226 (AAAKASSAPKAK) shows a compositional bias: low complexity. The segment at 215 to 240 (AAAKASSAPKAKGMQLGKKKNTSLLY) is disordered. Basic residues predominate over residues 231–240 (GKKKNTSLLY).

It belongs to the adaptor complexes medium subunit family. Delta-COP subfamily. In terms of assembly, oligomeric complex that consists of at least the alpha, beta, beta', gamma, delta, epsilon and zeta subunits.

Its subcellular location is the cytoplasm. It is found in the nucleus. Functionally, the coatomer is a cytosolic protein complex that binds to dilysine motifs and reversibly associates with Golgi non-clathrin-coated vesicles, which further mediate biosynthetic protein transport from the ER, via the Golgi up to the trans Golgi network. Coatomer complex is required for budding from Golgi membranes, and is essential for the retrograde Golgi-to-ER transport of dilysine-tagged proteins. This chain is Coatomer subunit delta (ret2), found in Schizosaccharomyces pombe (strain 972 / ATCC 24843) (Fission yeast).